The following is a 371-amino-acid chain: Dihydroorotate dehydrogenase (quinone) (371 aa).

FMN is bound by residues 79-83 and threonine 103; that span reads AGFDK. Lysine 83 is a substrate binding site. 128 to 132 lines the substrate pocket; that stretch reads NRMGF. Residues asparagine 156 and asparagine 189 each coordinate FMN. Asparagine 189 is a substrate binding site. The Nucleophile role is filled by serine 192. Asparagine 194 lines the substrate pocket. 2 residues coordinate FMN: lysine 225 and threonine 253. 254-255 lines the substrate pocket; the sequence is NT. Residues glycine 279, glycine 308, and 329–330 contribute to the FMN site; that span reads YT.

It belongs to the dihydroorotate dehydrogenase family. Type 2 subfamily. Monomer. Requires FMN as cofactor.

Its subcellular location is the cell membrane. The catalysed reaction is (S)-dihydroorotate + a quinone = orotate + a quinol. It participates in pyrimidine metabolism; UMP biosynthesis via de novo pathway; orotate from (S)-dihydroorotate (quinone route): step 1/1. Functionally, catalyzes the conversion of dihydroorotate to orotate with quinone as electron acceptor. In Corynebacterium glutamicum (strain ATCC 13032 / DSM 20300 / JCM 1318 / BCRC 11384 / CCUG 27702 / LMG 3730 / NBRC 12168 / NCIMB 10025 / NRRL B-2784 / 534), this protein is Dihydroorotate dehydrogenase (quinone).